The following is a 251-amino-acid chain: Mast cell protease 3 (251 aa).

The first 17 residues, 1–17 (MVLFLLLVALLSPAGEA), serve as a signal peptide directing secretion. A propeptide spans 18–19 (GK) (activation peptide). The region spanning 20 to 243 (IIGGHEAKPH…FLSWIQRTMR (224 aa)) is the Peptidase S1 domain. Cysteine 48 and cysteine 64 are joined by a disulfide. The active-site Charge relay system is the histidine 63. N-linked (GlcNAc...) asparagine glycosylation occurs at asparagine 70. Aspartate 107 (charge relay system) is an active-site residue. 2 cysteine pairs are disulfide-bonded: cysteine 141–cysteine 207 and cysteine 172–cysteine 186. Serine 201 functions as the Charge relay system in the catalytic mechanism.

The protein belongs to the peptidase S1 family. Granzyme subfamily.

Its subcellular location is the secreted. It is found in the cytoplasmic granule. The chain is Mast cell protease 3 from Ovis aries (Sheep).